Here is a 102-residue protein sequence, read N- to C-terminus: Small ribosomal subunit protein uS10 (102 aa).

It belongs to the universal ribosomal protein uS10 family. In terms of assembly, part of the 30S ribosomal subunit.

Functionally, involved in the binding of tRNA to the ribosomes. The sequence is that of Small ribosomal subunit protein uS10 from Malacoplasma penetrans (strain HF-2) (Mycoplasma penetrans).